The sequence spans 101 residues: MIGLPHYLVVAAILFTIGVFGIFVNRKNVIVILMSIELILLAVNINLVAFSAYLHDVAGQIFAMFVLTVAAAEAAVGLAILVTFFRNRGDIAVDDASMMKG.

Helical transmembrane passes span 4 to 24 (LPHY…GIFV), 30 to 50 (IVIL…LVAF), and 61 to 81 (IFAM…LAIL).

It belongs to the complex I subunit 4L family. As to quaternary structure, NDH-1 is composed of 14 different subunits. Subunits NuoA, H, J, K, L, M, N constitute the membrane sector of the complex.

It is found in the cell inner membrane. The enzyme catalyses a quinone + NADH + 5 H(+)(in) = a quinol + NAD(+) + 4 H(+)(out). Functionally, NDH-1 shuttles electrons from NADH, via FMN and iron-sulfur (Fe-S) centers, to quinones in the respiratory chain. The immediate electron acceptor for the enzyme in this species is believed to be ubiquinone. Couples the redox reaction to proton translocation (for every two electrons transferred, four hydrogen ions are translocated across the cytoplasmic membrane), and thus conserves the redox energy in a proton gradient. In Caulobacter vibrioides (strain ATCC 19089 / CIP 103742 / CB 15) (Caulobacter crescentus), this protein is NADH-quinone oxidoreductase subunit K.